The primary structure comprises 242 residues: DNA repair protein RecO (242 aa).

This sequence belongs to the RecO family. As to quaternary structure, monomer.

Its function is as follows. Involved in DNA repair and RecF pathway recombination. The chain is DNA repair protein RecO from Salmonella agona (strain SL483).